The primary structure comprises 201 residues: Holliday junction branch migration complex subunit RuvA (201 aa).

Positions 1 to 63 (MIEYVRGELA…EDAYVLYGFA (63 aa)) are domain I. A domain II region spans residues 64 to 142 (DKQEREIFLL…TMGATVAGGS (79 aa)). Positions 143-151 (ASAGMLLQS) are flexible linker. The segment at 152–201 (ASVEVQEEAVAALTMLGFAAAPSQKVVLAILKEEPDAPVEKVIKLALKRL) is domain III.

It belongs to the RuvA family. In terms of assembly, homotetramer. Forms an RuvA(8)-RuvB(12)-Holliday junction (HJ) complex. HJ DNA is sandwiched between 2 RuvA tetramers; dsDNA enters through RuvA and exits via RuvB. An RuvB hexamer assembles on each DNA strand where it exits the tetramer. Each RuvB hexamer is contacted by two RuvA subunits (via domain III) on 2 adjacent RuvB subunits; this complex drives branch migration. In the full resolvosome a probable DNA-RuvA(4)-RuvB(12)-RuvC(2) complex forms which resolves the HJ.

The protein localises to the cytoplasm. Its function is as follows. The RuvA-RuvB-RuvC complex processes Holliday junction (HJ) DNA during genetic recombination and DNA repair, while the RuvA-RuvB complex plays an important role in the rescue of blocked DNA replication forks via replication fork reversal (RFR). RuvA specifically binds to HJ cruciform DNA, conferring on it an open structure. The RuvB hexamer acts as an ATP-dependent pump, pulling dsDNA into and through the RuvAB complex. HJ branch migration allows RuvC to scan DNA until it finds its consensus sequence, where it cleaves and resolves the cruciform DNA. The sequence is that of Holliday junction branch migration complex subunit RuvA from Bacteroides thetaiotaomicron (strain ATCC 29148 / DSM 2079 / JCM 5827 / CCUG 10774 / NCTC 10582 / VPI-5482 / E50).